A 197-amino-acid polypeptide reads, in one-letter code: MRLARPLENLIDQLLKLPGIGPKTAQRLALYILKLPEMEARQLAQAIVDCRQKVFPCSRCGYLTDFDPCLICSDESRDKSLICIGEESSDVIAIERTGFRGQYFVLNKDFNLMEDKGLEDLNLKPLEDRLATGEIKEVVLALNPDMDGEVMSRFLATVAGSFGVKVTRLAHGLPVGGDIEFADEITLRRALEGRKEL.

The C4-type zinc finger occupies 57-72; it reads CSRCGYLTDFDPCLIC. One can recognise a Toprim domain in the interval 80 to 174; sequence SLICIGEESS…KVTRLAHGLP (95 aa).

It belongs to the RecR family.

Its function is as follows. May play a role in DNA repair. It seems to be involved in an RecBC-independent recombinational process of DNA repair. It may act with RecF and RecO. This is Recombination protein RecR from Syntrophomonas wolfei subsp. wolfei (strain DSM 2245B / Goettingen).